An 80-amino-acid polypeptide reads, in one-letter code: FXYD domain-containing ion transport regulator 7 (80 aa).

Over 1–23 (MATPTQTPTKAPEEPDPFYYDYN) the chain is Extracellular. O-linked (GlcNAc) threonine glycans are attached at residues threonine 3, threonine 5, and threonine 9. Residues 24-46 (TVQTVGMTLATILFLLGILIVIS) traverse the membrane as a helical segment. At 47–80 (KKVKCRKADSRSESPTCKSCKSELPSSAPGGGGV) the chain is on the cytoplasmic side. A disordered region spans residues 54–80 (ADSRSESPTCKSCKSELPSSAPGGGGV). Position 73 is a phosphoserine (serine 73).

Belongs to the FXYD family. In terms of assembly, regulatory subunit of the sodium/potassium-transporting ATPase which is composed of a catalytic alpha subunit, a non-catalytic beta subunit and a FXYD regulatory unit that modulates the enzymatic activity in a tissue- and isoform-specific way by changing affinities of the Na+/K+-ATPase toward Na(+), K(+) or ATP. O-glycosylated; required for stabilization and translocation to the plasma membrane.

The protein resides in the cell membrane. Its function is as follows. Associates with and regulates the activity of the sodium/potassium-transporting ATPase (NKA) which catalyzes the hydrolysis of ATP coupled with the exchange of Na(+) and K(+) ions across the plasma membrane. Reduces the apparent affinity for external K(+), an effect that depends on the presence of external Na(+) and voltage. Increases the apparent affinity for intracellular Na(+). The polypeptide is FXYD domain-containing ion transport regulator 7 (FXYD7) (Homo sapiens (Human)).